Here is a 753-residue protein sequence, read N- to C-terminus: LIM domain and actin-binding protein 1 (753 aa).

Methionine 1 carries the N-acetylmethionine modification. A Phosphoserine modification is found at serine 15. Basic and acidic residues predominate over residues 46–56 (EEANMERKKNN). 2 disordered regions span residues 46-66 (EEAN…HFRR) and 82-186 (GAEF…TSGK). Serine 132 is modified (phosphoserine). The segment covering 143 to 152 (PRSENSHDFK) has biased composition (basic and acidic residues). Residues 164–166 (CLG) carry the Required for interaction with NPC1L1 motif. The span at 167-177 (DSRHEAEKPET) shows a compositional bias: basic and acidic residues. Residues serine 225, serine 230, serine 242, and serine 263 each carry the phosphoserine modification. 2 disordered regions span residues 276–326 (AAVS…VSTT) and 341–379 (TCNS…TAKK). Over residues 278–291 (VSKQSSPASYTNEL) the composition is skewed to polar residues. Residues 292–305 (KTSESKTHKWEQKE) are compositionally biased toward basic and acidic residues. A compositionally biased stretch (polar residues) spans 342 to 351 (CNSQVKSEAQ). Phosphoserine is present on residues serine 348, serine 360, serine 367, and serine 372. Polar residues predominate over residues 363–375 (ARTSSLPESSPSK). Residues 386-446 (ESCVECQKTV…KPHFNQLFKS (61 aa)) enclose the LIM zinc-binding domain. Lysine 437 is subject to N6-succinyllysine. Phosphoserine is present on residues serine 467, serine 485, and serine 488. 3 disordered regions span residues 467 to 493 (SDNE…GVED), 505 to 669 (SMEA…FELE), and 682 to 703 (EDDN…GWSG). Residues 491-511 (VEDAPIAKVGVLAASMEAKAS) form a required for interaction with MYO5B region. 2 stretches are compositionally biased toward basic and acidic residues: residues 512–525 (SQRE…ETKK) and 554–565 (WPPEDDVCKTEA). The span at 598–609 (SSIKSPKASSPS) shows a compositional bias: low complexity. Serine 599, serine 602, serine 607, and serine 615 each carry phosphoserine. The segment covering 630 to 666 (MERKQTENARPSGEKENVGKSRWQGEEVPRSKDRSSF) has biased composition (basic and acidic residues). A phosphoserine mark is found at serine 692, serine 720, and serine 735.

As to quaternary structure, interacts with NPC1L1; bridges NPC1L1 with MYO5B. Interacts with MYO5B; bridges MYO5B with NPC1L1. Interacts with PXN; this complex stabilizes actin dynamics. Binds to G-actin and F-actin. Interacts with LUZP1 (via C-terminus); both proteins restrict ciliation and may work together to regulate this process. Binds RAB40B (GTP-bound); interaction influences LIMA1 subcellular localization in lamellipodia during cell migration. Phosphorylation of the C-terminal region by MAPK1/MAPK3 reduces its association with F-actin and contributes to actin filament reorganization and enhances cell motility. In terms of processing, ubiquitinated by the ECS(RAB40B) complex leading to its degradation. Highly expressed in the small intestine, including the duodenum, jejunum, and ileum. Low expression in the liver and very low expressed in the heart, spleen, lung, brain, and pancreas. Isoform Alpha is highly expressed in embryos from day 7-11 and in adult spleen and lung. Isoform Beta expression is highest in adult kidney, testis, lung and liver, intermediate in heart, brain, spleen, skeletal muscle and low in embryos.

It is found in the cytoplasm. Its subcellular location is the cell junction. The protein resides in the focal adhesion. It localises to the cytoskeleton. The protein localises to the stress fiber. It is found in the cell membrane. Its subcellular location is the cell projection. The protein resides in the ruffle. It localises to the lamellipodium. Functionally, actin-binding protein involved in actin cytoskeleton regulation and dynamics. Increases the number and size of actin stress fibers and inhibits membrane ruffling. Inhibits actin filament depolymerization. Bundles actin filaments, delays filament nucleation and reduces formation of branched filaments. Acts as a negative regulator of primary cilium formation. Plays a role in cholesterol homeostasis. Influences plasma cholesterol levels through regulation of intestinal cholesterol absorption. May act as a scaffold protein by regulating NPC1L1 transportation, an essential protein for cholesterol absorption, to the plasma membrane by recruiting MYO5B to NPC1L1, and thus facilitates cholesterol uptake. This chain is LIM domain and actin-binding protein 1 (Lima1), found in Mus musculus (Mouse).